The following is a 427-amino-acid chain: 3-phosphoshikimate 1-carboxyvinyltransferase (427 aa).

Residues Lys22, Ser23, and Arg27 each contribute to the 3-phosphoshikimate site. Position 22 (Lys22) interacts with phosphoenolpyruvate. 2 residues coordinate phosphoenolpyruvate: Gly96 and Arg124. The 3-phosphoshikimate site is built by Ser169, Ser170, Gln171, Ser197, Asp313, Asn336, and Lys340. Residue Gln171 participates in phosphoenolpyruvate binding. Asp313 (proton acceptor) is an active-site residue. Residues Arg344, Arg386, and Lys411 each contribute to the phosphoenolpyruvate site.

The protein belongs to the EPSP synthase family. Monomer.

The protein localises to the cytoplasm. The catalysed reaction is 3-phosphoshikimate + phosphoenolpyruvate = 5-O-(1-carboxyvinyl)-3-phosphoshikimate + phosphate. It participates in metabolic intermediate biosynthesis; chorismate biosynthesis; chorismate from D-erythrose 4-phosphate and phosphoenolpyruvate: step 6/7. In terms of biological role, catalyzes the transfer of the enolpyruvyl moiety of phosphoenolpyruvate (PEP) to the 5-hydroxyl of shikimate-3-phosphate (S3P) to produce enolpyruvyl shikimate-3-phosphate and inorganic phosphate. This chain is 3-phosphoshikimate 1-carboxyvinyltransferase, found in Escherichia coli O127:H6 (strain E2348/69 / EPEC).